The primary structure comprises 470 residues: Uronate isomerase (470 aa).

The protein belongs to the metallo-dependent hydrolases superfamily. Uronate isomerase family.

The enzyme catalyses D-glucuronate = D-fructuronate. It catalyses the reaction aldehydo-D-galacturonate = keto-D-tagaturonate. Its pathway is carbohydrate metabolism; pentose and glucuronate interconversion. This is Uronate isomerase from Vibrio vulnificus (strain YJ016).